A 339-amino-acid chain; its full sequence is HTH-type transcriptional regulator KdgR (339 aa).

Residues 9 to 64 (TTIKDVAECAGVSKSTVSRYINGKIDAISPEKVKNIKKAIAELNYRPSKMAQGLKI) enclose the HTH lacI-type domain. Residues 11 to 30 (IKDVAECAGVSKSTVSRYIN) constitute a DNA-binding region (H-T-H motif).

In terms of biological role, transcriptional repressor of the kdgRKAT and kduID operons for pectin utilization. This chain is HTH-type transcriptional regulator KdgR (kdgR), found in Bacillus subtilis (strain 168).